Consider the following 98-residue polypeptide: NADH-ubiquinone oxidoreductase chain 4L (98 aa).

A run of 3 helical transmembrane segments spans residues 1–21 (MPLI…GMLV), 29–49 (SLLC…LMTL), and 58–78 (IVPI…LALL).

This sequence belongs to the complex I subunit 4L family. In terms of assembly, core subunit of respiratory chain NADH dehydrogenase (Complex I) which is composed of 45 different subunits.

The protein resides in the mitochondrion inner membrane. The catalysed reaction is a ubiquinone + NADH + 5 H(+)(in) = a ubiquinol + NAD(+) + 4 H(+)(out). Core subunit of the mitochondrial membrane respiratory chain NADH dehydrogenase (Complex I) which catalyzes electron transfer from NADH through the respiratory chain, using ubiquinone as an electron acceptor. Part of the enzyme membrane arm which is embedded in the lipid bilayer and involved in proton translocation. This Pan paniscus (Pygmy chimpanzee) protein is NADH-ubiquinone oxidoreductase chain 4L (MT-ND4L).